We begin with the raw amino-acid sequence, 433 residues long: Tol-Pal system protein TolB (433 aa).

An N-terminal signal peptide occupies residues 1-21; that stretch reads MINLFRGLLVVLCFASAMVSA.

Belongs to the TolB family. As to quaternary structure, the Tol-Pal system is composed of five core proteins: the inner membrane proteins TolA, TolQ and TolR, the periplasmic protein TolB and the outer membrane protein Pal. They form a network linking the inner and outer membranes and the peptidoglycan layer.

It is found in the periplasm. Its function is as follows. Part of the Tol-Pal system, which plays a role in outer membrane invagination during cell division and is important for maintaining outer membrane integrity. The polypeptide is Tol-Pal system protein TolB (Pseudomonas syringae pv. syringae (strain B728a)).